The following is a 433-amino-acid chain: Dihydroorotase (433 aa).

Residues histidine 63 and histidine 65 each contribute to the Zn(2+) site. Residues 65–67 (HLR) and asparagine 97 contribute to the substrate site. Aspartate 155, histidine 182, and histidine 235 together coordinate Zn(2+). Substrate is bound at residue asparagine 283. A Zn(2+)-binding site is contributed by aspartate 310. Aspartate 310 is an active-site residue. Histidine 314 is a substrate binding site.

Belongs to the metallo-dependent hydrolases superfamily. DHOase family. Class I DHOase subfamily. The cofactor is Zn(2+).

The catalysed reaction is (S)-dihydroorotate + H2O = N-carbamoyl-L-aspartate + H(+). It participates in pyrimidine metabolism; UMP biosynthesis via de novo pathway; (S)-dihydroorotate from bicarbonate: step 3/3. Catalyzes the reversible cyclization of carbamoyl aspartate to dihydroorotate. This is Dihydroorotase from Anaeromyxobacter dehalogenans (strain 2CP-1 / ATCC BAA-258).